The sequence spans 517 residues: E3 ubiquitin-protein ligase TRIM65 (517 aa).

The residue at position 2 (Ala2) is an N-acetylalanine. The RING-type zinc finger occupies 12–51; sequence CAICLGLYQDPVTLPCGHNFCGACIRDWWDRCGKACPECR. Residues 75–94 are disordered; sequence AGPARDPGPDPGPGPDPAAR. The segment at 90–137 adopts a B box-type zinc-finger fold; it reads DPAARCPRHGRPLELFCRTEGRCVCSVCTVRECRLHERALLDAERLKR. 4 residues coordinate Zn(2+): Cys95, His98, Cys117, and His125. The stretch at 139–227 forms a coiled coil; that stretch reads AQLRASLEVT…QRLRVHLEAV (89 aa). A Phosphoserine modification is found at Ser185. Lys206 participates in a covalent cross-link: (Microbial infection) Glycyl lysine isopeptide (Lys-Gly) (interchain with G-Cter in ubiquitin). One can recognise a B30.2/SPRY domain in the interval 313-506; sequence APVPSTVCPL…LTLCHQPGAV (194 aa).

Belongs to the TRIM/RBCC family. As to quaternary structure, homo-multimerizes. Interacts with ARRDC4.

The protein localises to the cytoplasm. It catalyses the reaction S-ubiquitinyl-[E2 ubiquitin-conjugating enzyme]-L-cysteine + [acceptor protein]-L-lysine = [E2 ubiquitin-conjugating enzyme]-L-cysteine + N(6)-ubiquitinyl-[acceptor protein]-L-lysine.. It functions in the pathway protein modification; protein ubiquitination. In terms of biological role, E3 ubiquitin ligase that plays a role in several processes including innate immnity, autophagy or inflammation. Negatively regulates miRNAs by modulating the ubiquitination and stability of TNRC6A, a protein involved in RNA-mediated gene silencing by both micro-RNAs (miRNAs) and short interfering RNAs. This ubiquitination results in the suppressed expression of miR-138-5p leading to increased autophagy. Upon enteroviral infection, promotes 'Lys-63'-mediated ubiquitination activation of IFIH1/MDA5 leading to innate signaling cascade. Mechanistically, selectively recognizes MDA5 filaments that occur on dsRNAs. Plays also a role in limitation of inflammation through different mechanisms. First, promotes 'Lys-48'-mediated ubiquitination of VCAM1 leading to its degradation and limitation of LPS-induced lung inflammation. In addition, negatively regulates inflammasome activation by promoting 'lys48'-linked ubiquitination of NLRP3 which is critical for the inhibition of NLRP3 inflammasome activation in resting macrophages. The chain is E3 ubiquitin-protein ligase TRIM65 (TRIM65) from Homo sapiens (Human).